Consider the following 93-residue polypeptide: C-C motif chemokine 17 (93 aa).

Positions 1–23 (MMSLQMLLLAALLLGTSLQHASA) are cleaved as a signal peptide. Disulfide bonds link Cys33/Cys57 and Cys34/Cys73.

This sequence belongs to the intercrine beta (chemokine CC) family.

The protein localises to the secreted. Functionally, chemokine, which displays chemotactic activity for T lymphocytes, preferentially Th2 cells, but not monocytes or granulocytes. Therefore plays an important role in a wide range of inflammatory and immunological processes. Acts by binding to CCR4 at T-cell surface. Mediates GM-CSF/CSF2-driven pain and inflammation. In the brain, required to maintain the typical, highly branched morphology of hippocampal microglia under homeostatic conditions. May be important for the appropriate adaptation of microglial morphology and synaptic plasticity to acute lipopolysaccharide (LPS)-induced neuroinflammation. Plays a role in wound healing, mainly by inducing fibroblast migration into the wound. The polypeptide is C-C motif chemokine 17 (Ccl17) (Rattus norvegicus (Rat)).